Here is a 531-residue protein sequence, read N- to C-terminus: RCC1 and BTB domain-containing protein 1 (531 aa).

6 RCC1 repeats span residues Asn40–Thr91, Asp93–Ala145, Gly147–Asp198, Ser199–Asp250, Gly252–Thr302, and Gly304–Val356. 2 BTB domains span residues Ala370–Pro437 and Glu470–Leu499.

In terms of tissue distribution, in the retina, mainly expressed in the inner retina with strong signals reaching up to the outer plexiform layer (at protein level).

The protein resides in the nucleus. Functionally, may be involved in cell cycle regulation by chromatin remodeling. This is RCC1 and BTB domain-containing protein 1 (Rcbtb1) from Mus musculus (Mouse).